Reading from the N-terminus, the 211-residue chain is Protein U63 (211 aa).

The protein belongs to the herpesviridae UL92 family.

The chain is Protein U63 (U63) from Human herpesvirus 7 (strain JI) (HHV-7).